The primary structure comprises 100 residues: Small ribosomal subunit protein uS14c (100 aa).

It belongs to the universal ribosomal protein uS14 family. Part of the 30S ribosomal subunit.

The protein resides in the plastid. Its subcellular location is the chloroplast. Its function is as follows. Binds 16S rRNA, required for the assembly of 30S particles. This is Small ribosomal subunit protein uS14c from Amborella trichopoda.